The following is an 87-amino-acid chain: Small ribosomal subunit protein bS20 (87 aa).

Residues 1–25 (MANSAQARKRARQNISHRNRNMSLR) are disordered. Positions 7 to 20 (ARKRARQNISHRNR) are enriched in basic residues.

Belongs to the bacterial ribosomal protein bS20 family.

In terms of biological role, binds directly to 16S ribosomal RNA. The protein is Small ribosomal subunit protein bS20 of Nitrosospira multiformis (strain ATCC 25196 / NCIMB 11849 / C 71).